The following is a 397-amino-acid chain: (S)-8-oxocitronellyl enol synthase ISY2 (397 aa).

NADP(+)-binding positions include 36-38 (TGL), 64-65 (RR), 82-83 (DV), 106-107 (TW), Gln144, Tyr180, Ile207, and 214-216 (SMM). Tyr180 is a catalytic residue.

The protein belongs to the short-chain dehydrogenases/reductases (SDR) family.

The enzyme catalyses (S)-8-oxocitronellyl enol + NADP(+) = (6E)-8-oxogeranial + NADPH + H(+). The catalysed reaction is (S)-8-oxocitronellyl enol + NAD(+) = (6E)-8-oxogeranial + NADH + H(+). Iridoid synthase that catalyzes the first step in generation of the iridoid ring scaffold using the linear monoterpene (6E)-8-oxogeranial as substrate. Iridoids comprise a large family of distinctive bicyclic monoterpenes that possess a wide range of pharmacological activities, including anticancer, anti-inflammatory, antifungal and antibacterial activities. Catalyzes the conversion of the linear monoterpene (6E)-8-oxogeranial to (S)-8-oxocitronellyl enol, a precursor of nepetalactones, which are metabolites that are both insect-repellent and have euphoric effect in cats. The chain is (S)-8-oxocitronellyl enol synthase ISY2 from Nepeta cataria (Catnip).